Consider the following 171-residue polypeptide: Signal peptidase complex catalytic subunit SEC11 (171 aa).

Topologically, residues methionine 1–glutamine 6 are cytoplasmic. The chain crosses the membrane as a helical; Signal-anchor for type II membrane protein span at residues leucine 7 to tryptophan 24. Residues lysine 25 to glutamate 171 are Lumenal-facing. Active-site charge relay system residues include serine 44, histidine 83, and aspartate 113. A C-terminal short (CTS) helix region spans residues glycine 157–leucine 168.

This sequence belongs to the peptidase S26B family. As to quaternary structure, component of the signal peptidase complex (SPC) composed of a catalytic subunit SEC11 and three accessory subunits SPC1, SPC2 and SPC3. The complex induces a local thinning of the ER membrane which is used to measure the length of the signal peptide (SP) h-region of protein substrates. This ensures the selectivity of the complex towards h-regions shorter than 18-20 amino acids. SPC associates with the translocon complex.

The protein localises to the endoplasmic reticulum membrane. The enzyme catalyses Cleavage of hydrophobic, N-terminal signal or leader sequences from secreted and periplasmic proteins.. Catalytic component of the signal peptidase complex (SPC) which catalyzes the cleavage of N-terminal signal sequences from nascent proteins as they are translocated into the lumen of the endoplasmic reticulum. Specifically cleaves N-terminal signal peptides that contain a hydrophobic alpha-helix (h-region) shorter than 18-20 amino acids. The sequence is that of Signal peptidase complex catalytic subunit SEC11 (SEC11) from Komagataella phaffii (strain GS115 / ATCC 20864) (Yeast).